The following is a 153-amino-acid chain: Ribosome maturation factor RimP (153 aa).

It belongs to the RimP family.

It is found in the cytoplasm. Required for maturation of 30S ribosomal subunits. This Clostridioides difficile (strain 630) (Peptoclostridium difficile) protein is Ribosome maturation factor RimP.